Here is a 97-residue protein sequence, read N- to C-terminus: Cytochrome c2 iso-2 (97 aa).

Positions 10, 13, 14, and 75 each coordinate heme c.

The protein belongs to the cytochrome c family. In terms of processing, binds 1 heme c group covalently per subunit.

Functionally, cytochrome c2 is found mainly in purple, non-sulfur, photosynthetic bacteria where it functions as the electron donor to the oxidized bacteriochlorophyll in the photophosphorylation pathway. However, it may also have a role in the respiratory chain and is found in some non-photosynthetic bacteria. The sequence is that of Cytochrome c2 iso-2 from Magnetospirillum molischianum (Rhodospirillum molischianum).